The following is a 402-amino-acid chain: Acyl-[acyl-carrier-protein] desaturase 3, chloroplastic (402 aa).

A chloroplast-targeting transit peptide spans 1–32 (MSLTGCLPPRPPCSMRRRTSGGGASVSPVVAM). The interval 1–66 (MSLTGCLPPR…EVPPQVTHTL (66 aa)) is disordered. Residues Glu139, Glu178, His181, Glu231, Glu264, and His267 each coordinate Fe cation.

This sequence belongs to the fatty acid desaturase type 2 family. In terms of assembly, homodimer. Fe(2+) serves as cofactor.

Its subcellular location is the plastid. It is found in the chloroplast. Its pathway is lipid metabolism; fatty acid metabolism. In terms of biological role, introduces a cis double bond in the acyl chain of an acyl-[acyl-carrier protein]. The chain is Acyl-[acyl-carrier-protein] desaturase 3, chloroplastic from Oryza sativa subsp. japonica (Rice).